We begin with the raw amino-acid sequence, 31 residues long: Cytochrome b6-f complex subunit 6 (31 aa).

The helical transmembrane segment at 4 to 26 threads the bilayer; that stretch reads LTSYFGFLLAALTITSALFIGLN.

Belongs to the PetL family. As to quaternary structure, the 4 large subunits of the cytochrome b6-f complex are cytochrome b6, subunit IV (17 kDa polypeptide, PetD), cytochrome f and the Rieske protein, while the 4 small subunits are PetG, PetL, PetM and PetN. The complex functions as a dimer.

It localises to the plastid. It is found in the chloroplast thylakoid membrane. Component of the cytochrome b6-f complex, which mediates electron transfer between photosystem II (PSII) and photosystem I (PSI), cyclic electron flow around PSI, and state transitions. PetL is important for photoautotrophic growth as well as for electron transfer efficiency and stability of the cytochrome b6-f complex. In Amaranthus caudatus (Love-lies-bleeding), this protein is Cytochrome b6-f complex subunit 6.